Consider the following 170-residue polypeptide: Calcineurin subunit B type 2 (170 aa).

EF-hand domains are found at residues 18–46 (DEIRRLGKRFRKLDLDNSGALSVDEFMSL), 50–85 (QQNPLVQRVIDIFDADGNGEVDFKEFIQGVSQFSVK), 87–122 (DKLSKLRFAFRIYDMDNDGYISNGELFQVLKMMVGN), and 128–163 (QLQQIVDKTIGFADKDEDGKISFDEFCSVVGNTDIH). Residues D31, D33, S35, E42, D63, D65, N67, E69, E74, D100, D102, D104, Y106, E111, D141, D143, D145, K147, and E152 each coordinate Ca(2+). S35 is modified (phosphoserine).

Belongs to the calcineurin regulatory subunit family. In terms of assembly, composed of a catalytic subunit (A) and a regulatory subunit (B). Interacts with sra.

Calcineurin is a calcium-binding and calmodulin-binding protein found in all cells from yeast to mammals, and a calcium-dependent, calmodulin-stimulated protein phosphatase. This Drosophila melanogaster (Fruit fly) protein is Calcineurin subunit B type 2 (CanB2).